We begin with the raw amino-acid sequence, 260 residues long: Uridylate kinase (260 aa).

29–32 (KLSG) lines the ATP pocket. Residues 37 to 42 (GDLGYG) are involved in allosteric activation by GTP. Gly-71 contributes to the UMP binding site. The ATP site is built by Gly-72 and Arg-76. UMP contacts are provided by residues Asp-91 and 152–159 (SGNPFFTT). ATP is bound by residues Thr-179, Tyr-185, and Asp-188.

It belongs to the UMP kinase family. As to quaternary structure, homohexamer.

Its subcellular location is the cytoplasm. It catalyses the reaction UMP + ATP = UDP + ADP. It functions in the pathway pyrimidine metabolism; CTP biosynthesis via de novo pathway; UDP from UMP (UMPK route): step 1/1. With respect to regulation, allosterically activated by GTP. Inhibited by UTP. Functionally, catalyzes the reversible phosphorylation of UMP to UDP. The sequence is that of Uridylate kinase from Synechocystis sp. (strain ATCC 27184 / PCC 6803 / Kazusa).